The primary structure comprises 745 residues: Single-minded homolog 1-A (745 aa).

Residues Met1–Arg53 form the bHLH domain. PAS domains are found at residues Gly77 to His147 and Pro218 to Gly288. Residues Glu336–Ser745 enclose the Single-minded C-terminal domain. Polar residues predominate over residues Thr350–Thr364. 2 disordered regions span residues Thr350 to Ser413 and Glu529 to Lys563. Positions Arg368 to Ser387 match the Nuclear localization signal motif. Residues Val369–Thr381 show a composition bias toward basic residues. The span at Ala532–Asp544 shows a compositional bias: low complexity.

As to quaternary structure, efficient DNA binding requires dimerization with another bHLH protein. Heterodimer of sim1a and arnt. Expressed in embryonic forebrain at the eleven somite stage. Detected in brain throughout embryonic development.

The protein localises to the nucleus. In terms of biological role, transcriptional factor that may have pleiotropic effects during embryogenesis and in the adult. This chain is Single-minded homolog 1-A (sim1a), found in Danio rerio (Zebrafish).